The chain runs to 357 residues: Arginine kinase Cal b 2.0101 (357 aa).

The 83-residue stretch at 9 to 91 (KLEEGFKKLE…FDPIIEDYHK (83 aa)) folds into the Phosphagen kinase N-terminal domain. 64 to 68 (GVGVY) contacts L-arginine. A Phosphagen kinase C-terminal domain is found at 119–356 (FVISTRVRCG…LELIKIEKEM (238 aa)). Residues 122-126 (STRVR) and His185 each bind ATP. Cys201 and Cys271 are disulfide-bonded. Glu225 is a binding site for L-arginine. Arg229 is a binding site for ATP. Cys271 contacts L-arginine. ATP is bound by residues 280–284 (RASVH) and 309–314 (RGTRGE). Residue Glu314 coordinates L-arginine.

Belongs to the ATP:guanido phosphotransferase family. In terms of tissue distribution, expressed in chela muscle (at protein level). Expressed in muscle.

The catalysed reaction is L-arginine + ATP = N(omega)-phospho-L-arginine + ADP + H(+). In terms of biological role, catalyzes the reversible transfer of high energy ATP gamma-phosphate group to L-arginine. This chain is Arginine kinase Cal b 2.0101, found in Callinectes bellicosus (Warrior swimming crab).